Consider the following 272-residue polypeptide: Zinc finger protein 32 (272 aa).

The span at 50-65 shows a compositional bias: basic and acidic residues; the sequence is RREKLEQKSPESKALQ. The interval 50–69 is disordered; that stretch reads RREKLEQKSPESKALQEDSP. 3 consecutive C2H2-type zinc fingers follow at residues 76–98, 104–126, and 132–154; these read YDCQ…ERIH, FECT…QRIH, and YQCK…ERLH. Zn(2+) contacts are provided by Cys78, Cys81, His94, His98, Cys106, Cys109, His122, His126, Ser140, Gln143, Gly156, Tyr160, Phe197, Lys200, Leu213, Ala217, Cys246, Cys249, His262, and Cys266. C2H2-type zinc fingers lie at residues 160–182 and 188–210; these read YECA…RRVH and YRCD…IRVH. Residues 216-238 form a C2H2-type 6 zinc finger; that stretch reads YACSHCRKSFHTRGNCLLHGKVH. A CCHC-type zinc finger spans residues 244-266; the sequence is YLCGQCGKSFTQRGSLAVHQRSC.

The protein belongs to the krueppel C2H2-type zinc-finger protein family.

The protein localises to the nucleus. In terms of biological role, may be involved in transcriptional regulation. This Mus musculus (Mouse) protein is Zinc finger protein 32 (Znf32).